Consider the following 293-residue polypeptide: ATP synthase gamma chain (293 aa).

The protein belongs to the ATPase gamma chain family. As to quaternary structure, F-type ATPases have 2 components, CF(1) - the catalytic core - and CF(0) - the membrane proton channel. CF(1) has five subunits: alpha(3), beta(3), gamma(1), delta(1), epsilon(1). CF(0) has three main subunits: a, b and c.

The protein resides in the cell inner membrane. Functionally, produces ATP from ADP in the presence of a proton gradient across the membrane. The gamma chain is believed to be important in regulating ATPase activity and the flow of protons through the CF(0) complex. In Gluconacetobacter diazotrophicus (strain ATCC 49037 / DSM 5601 / CCUG 37298 / CIP 103539 / LMG 7603 / PAl5), this protein is ATP synthase gamma chain.